Reading from the N-terminus, the 552-residue chain is Alcohol dehydrogenase [acceptor] (552 aa).

3 to 32 provides a ligand contact to FAD; that stretch reads DYIIVGAGSAGCVLANRLSADPSKRVCLLE. His469 (proton acceptor) is an active-site residue.

This sequence belongs to the GMC oxidoreductase family. FAD is required as a cofactor.

Its subcellular location is the cell inner membrane. The enzyme catalyses a primary alcohol + A = an aldehyde + AH2. Its function is as follows. Converts aliphatic medium-chain-length alcohols into aldehydes. May be linked to the electron transfer chain. In Pseudomonas putida (Arthrobacter siderocapsulatus), this protein is Alcohol dehydrogenase [acceptor] (alkJ).